Here is a 792-residue protein sequence, read N- to C-terminus: Xaa-Pro dipeptidyl-peptidase (792 aa).

Residues Ser-363, Asp-482, and His-513 each act as charge relay system in the active site.

Belongs to the peptidase S15 family. Homodimer.

It localises to the cytoplasm. The enzyme catalyses Hydrolyzes Xaa-Pro-|- bonds to release unblocked, N-terminal dipeptides from substrates including Ala-Pro-|-p-nitroanilide and (sequentially) Tyr-Pro-|-Phe-Pro-|-Gly-Pro-|-Ile.. Its function is as follows. Removes N-terminal dipeptides sequentially from polypeptides having unsubstituted N-termini provided that the penultimate residue is proline. The polypeptide is Xaa-Pro dipeptidyl-peptidase (pepX) (Lactobacillus delbrueckii subsp. lactis).